A 467-amino-acid chain; its full sequence is Argininosuccinate lyase (467 aa).

Belongs to the lyase 1 family. Argininosuccinate lyase subfamily.

It is found in the cytoplasm. It catalyses the reaction 2-(N(omega)-L-arginino)succinate = fumarate + L-arginine. The protein operates within amino-acid biosynthesis; L-arginine biosynthesis; L-arginine from L-ornithine and carbamoyl phosphate: step 3/3. In Allorhizobium ampelinum (strain ATCC BAA-846 / DSM 112012 / S4) (Agrobacterium vitis (strain S4)), this protein is Argininosuccinate lyase.